Reading from the N-terminus, the 259-residue chain is Small ribosomal subunit protein uS2 (259 aa).

This sequence belongs to the universal ribosomal protein uS2 family.

This is Small ribosomal subunit protein uS2 from Fervidobacterium nodosum (strain ATCC 35602 / DSM 5306 / Rt17-B1).